Here is a 173-residue protein sequence, read N- to C-terminus: Shikimate kinase (173 aa).

14-19 serves as a coordination point for ATP; the sequence is GAGKST. Ser18 provides a ligand contact to Mg(2+). 3 residues coordinate substrate: Asp36, Arg60, and Gly82. Arg120 provides a ligand contact to ATP. Arg140 contributes to the substrate binding site. An ATP-binding site is contributed by Gln157.

The protein belongs to the shikimate kinase family. As to quaternary structure, monomer. Mg(2+) is required as a cofactor.

The protein resides in the cytoplasm. It catalyses the reaction shikimate + ATP = 3-phosphoshikimate + ADP + H(+). Its pathway is metabolic intermediate biosynthesis; chorismate biosynthesis; chorismate from D-erythrose 4-phosphate and phosphoenolpyruvate: step 5/7. Catalyzes the specific phosphorylation of the 3-hydroxyl group of shikimic acid using ATP as a cosubstrate. This chain is Shikimate kinase, found in Buchnera aphidicola subsp. Acyrthosiphon pisum (strain APS) (Acyrthosiphon pisum symbiotic bacterium).